The following is a 1250-amino-acid chain: TBC1 domain family member 9B (1250 aa).

GRAM domains follow at residues 142-209 (LKMR…EKNA) and 288-356 (ECYR…EKAD). Thr397 is subject to Phosphothreonine. The disordered stretch occupies residues 397-443 (TPSKQPGSIGSRKASVVDPSTESSPAPQEGSEQPASPASPLSSRQSF). 4 positions are modified to phosphoserine: Ser411, Ser432, Ser435, and Ser463. A compositionally biased stretch (polar residues) spans 414 to 443 (DPSTESSPAPQEGSEQPASPASPLSSRQSF). The Rab-GAP TBC domain maps to 508-695 (GIPESLRGEL…VIVDCFFYEG (188 aa)). The helical transmembrane segment at 668–688 (LSWFLTLFLSVMPFESAVVIV) threads the bilayer. An EF-hand domain is found at 879–914 (HTPLLAGRMFRLLDENKDSLINFKEFVTGMSGMYHG). 3 disordered regions span residues 974–999 (LPQEEQEGSGSEERGEEKGTSSPDYR), 1069–1093 (SARTGRKPRDCATEEDEPPAPELHQ), and 1128–1157 (VEGGSGEGQGSPSQLLSDDETKDDMSMSSY). The span at 984 to 999 (SEERGEEKGTSSPDYR) shows a compositional bias: basic and acidic residues. Ser1241 is subject to Phosphoserine.

The protein localises to the membrane. In terms of biological role, may act as a GTPase-activating protein for Rab family protein(s). In Homo sapiens (Human), this protein is TBC1 domain family member 9B (TBC1D9B).